Consider the following 546-residue polypeptide: G1/S-specific cyclin CLN1 (546 aa).

The interval 224–265 (SNGKEWSCKRKSQSSDDSDATVEEHISSSPQSTGLDGDTTTM) is disordered.

Belongs to the cyclin family.

In terms of biological role, essential for the control of the cell cycle at the G1/S (start) transition. Interacts with the CDC28 protein kinase to form MPF. The polypeptide is G1/S-specific cyclin CLN1 (CLN1) (Saccharomyces cerevisiae (strain ATCC 204508 / S288c) (Baker's yeast)).